The sequence spans 285 residues: Thrombin-like enzyme TLBm (285 aa).

Residues 1-273 (VIGGDECNIN…HLDWSQSVIA (273 aa)) enclose the Peptidase S1 domain. Cystine bridges form between Cys7/Cys181, Cys30/Cys46, Cys94/Cys284, Cys156/Cys234, Cys192/Cys209, and Cys224/Cys249. Residues His45 and Asp113 each act as charge relay system in the active site. Ser228 acts as the Charge relay system in catalysis.

This sequence belongs to the peptidase S1 family. Snake venom subfamily. Monomer. In terms of processing, homologous thrombin-like enzymes are N-glycosylated. This enzyme does not contain the consensus glycosylation sites, suggesting it is not glycosylated. As to expression, expressed by the venom gland.

It is found in the secreted. With respect to regulation, inhibited by PMSF, disodium-EDTA, S(Dm) and soybean trypsin inhibitor (SBTI). SBTI and S(Dm) (the anti-hemorrhagic protein) acts as a non-competitive inhibitors that decrease the enzymatic activity. Thrombin-like enzyme that induces the formation of fibrin clot. Cleaves the Aalpha-chain of fibrinogen (FGA) with higher activity than the Bbeta-chain (FGB). Induces platelet aggregation in both platelet-rich plasma and in washed platelet preparations. This aggregation is strongly inhibited by preincubation of the enzyme with PMSF. This Bothrops marajoensis (Marajo lancehead) protein is Thrombin-like enzyme TLBm.